The primary structure comprises 265 residues: Transcription factor BHLH089 (265 aa).

Residues 1-132 (MDPAPTLAAE…PPPPEPPKQD (132 aa)) form a disordered region. Composition is skewed to gly residues over residues 17-29 (LGGG…GGRG) and 44-53 (SRGGGGGGGA). Over residues 95-105 (SKSSGDNSSLR) the composition is skewed to polar residues. Positions 142–155 (QATDSHSLAERARR) are basic motif; degenerate. The 51-residue stretch at 142-192 (QATDSHSLAERARREKISERMKILQDLVPGCNKVIGKASVLDEIINYIQAL) folds into the bHLH domain. The segment at 156 to 192 (EKISERMKILQDLVPGCNKVIGKASVLDEIINYIQAL) is helix-loop-helix motif.

It belongs to the bHLH protein family. As to quaternary structure, interacts with RSS3.

Its subcellular location is the nucleus. In terms of biological role, transcription factor that may regulate jasmonate-regulated genes. The protein is Transcription factor BHLH089 of Oryza sativa subsp. japonica (Rice).